Consider the following 451-residue polypeptide: Clusterin (451 aa).

Positions 1-18 (MELPLLALLSLGLVCQGG) are cleaved as a signal peptide. 5 disulfide bridges follow: C98-C314, C109-C306, C112-C303, C117-C296, and C125-C286. N-linked (GlcNAc...) asparagine glycosylation is found at N99, N141, N278, N355, N375, and N447.

It belongs to the clusterin family. As to quaternary structure, antiparallel disulfide-linked heterodimer of an alpha chain and a beta chain. Self-associates and forms higher oligomers. Interacts with a broad range of misfolded proteins. Proteolytically cleaved on its way through the secretory system, probably within the Golgi lumen. In terms of processing, polyubiquitinated, leading to proteasomal degradation.

The protein resides in the secreted. It localises to the cytoplasmic vesicle. It is found in the secretory vesicle. The protein localises to the chromaffin granule. Its subcellular location is the nucleus. The protein resides in the cytoplasm. It localises to the mitochondrion membrane. It is found in the cytosol. The protein localises to the endoplasmic reticulum. In terms of biological role, functions as extracellular chaperone that prevents aggregation of nonnative proteins. Prevents stress-induced aggregation of blood plasma proteins. Does not require ATP. Maintains partially unfolded proteins in a state appropriate for subsequent refolding by other chaperones, such as HSPA8/HSC70. Does not refold proteins by itself. Binding to cell surface receptors triggers internalization of the chaperone-client complex and subsequent lysosomal or proteasomal degradation. When secreted, protects cells against apoptosis and against cytolysis by complement: inhibits assembly of the complement membrane attack complex (MAC) by preventing polymerization of C9 pore component of the MAC complex. Intracellular forms interact with ubiquitin and SCF (SKP1-CUL1-F-box protein) E3 ubiquitin-protein ligase complexes and promote the ubiquitination and subsequent proteasomal degradation of target proteins. Modulates NF-kappa-B transcriptional activity. Promotes apoptosis when in the nucleus. Inhibits apoptosis when associated with the mitochondrial membrane by interference with BAX-dependent release of cytochrome c into the cytoplasm. Plays a role in the regulation of cell proliferation. This is Clusterin (CLU) from Coturnix japonica (Japanese quail).